The chain runs to 101 residues: Small ribosomal subunit protein uS14 (101 aa).

The segment at 1 to 21 (MAKTSSVEKNNRRRKLADQYG) is disordered.

This sequence belongs to the universal ribosomal protein uS14 family. Part of the 30S ribosomal subunit. Contacts proteins S3 and S10.

Binds 16S rRNA, required for the assembly of 30S particles and may also be responsible for determining the conformation of the 16S rRNA at the A site. The protein is Small ribosomal subunit protein uS14 of Mesorhizobium japonicum (strain LMG 29417 / CECT 9101 / MAFF 303099) (Mesorhizobium loti (strain MAFF 303099)).